Here is a 330-residue protein sequence, read N- to C-terminus: 3'-5' exonuclease (330 aa).

Residues 1–92 (MDQYLIKMST…DGTPSPEKEI (92 aa)) are disordered. Composition is skewed to basic and acidic residues over residues 27–39 (NTTR…KEKI) and 48–66 (KDTP…ENPP). 2 positions are modified to phosphoserine: serine 79 and serine 87. The 3'-5' exonuclease domain occupies 117–289 (SADEVMQWVE…IGQVIYRDIE (173 aa)). Residues aspartate 139, glutamate 141, and aspartate 277 each contribute to the Mg(2+) site.

It belongs to the WRNexo family.

The protein localises to the nucleus. Functionally, has exonuclease activity on both single-stranded and duplex templates bearing overhangs, but not blunt ended duplex DNA, and cleaves in a 3'-5' direction. Essential for the formation of DNA replication focal centers. Has an important role in maintaining genome stability. The polypeptide is 3'-5' exonuclease (Drosophila virilis (Fruit fly)).